Reading from the N-terminus, the 382-residue chain is Prolargin (382 aa).

The signal sequence occupies residues 1–20; that stretch reads MRSPLCWLLPLLILASVAQG. A disordered region spans residues 19–66; the sequence is QGQPTRRPRPGTGPGRRPRPRPRPTPSFPQPDEPAEPTDLPPPLPPGP. Composition is skewed to pro residues over residues 41–50 and 57–66; these read RPTPSFPQPD and DLPPPLPPGP. LRR repeat units lie at residues 95 to 114, 115 to 138, 139 to 162, 163 to 183, 184 to 207, 208 to 233, 234 to 254, 255 to 278, 279 to 303, 304 to 323, 324 to 362, and 363 to 382; these read RKVP…NNFI, TELP…NNRI, RKID…KNQL, EEVP…QNHI, SRIP…HNRL, SDGV…HNIL, RKMP…SNKI, ETIP…YNKL, TDRG…HNRI, SSVP…NNSI, EKIN…GNYL, and KPPI…SVVI. Asn-124 carries N-linked (GlcNAc...) asparagine glycosylation. Residues Asn-289, Asn-320, and Asn-327 are each glycosylated (N-linked (GlcNAc...) asparagine). Cysteines 332 and 373 form a disulfide.

It belongs to the small leucine-rich proteoglycan (SLRP) family. SLRP class II subfamily. In terms of assembly, binds the basement membrane heparan sulfate proteoglycan perlecan and triple helical collagens type I and type II. Post-translationally, glycosylated; contains heparan sulfate. In terms of tissue distribution, connective tissue.

The protein resides in the secreted. It localises to the extracellular space. It is found in the extracellular matrix. Functionally, may anchor basement membranes to the underlying connective tissue. The polypeptide is Prolargin (PRELP) (Homo sapiens (Human)).